We begin with the raw amino-acid sequence, 465 residues long: MTQRVRTRFAPSPTGFIHLGNIRSALYPWAFARKMKGDFILRIEDTDVERSSQEAVDVILEAMDWLDMDIDEGPFYQMQRMDRYRAVVAQMVQQELAYPCYMSTEELDALREAQRERGEKPRYDGTWRPAPGKILPPPPAGVQPVIRFKNPIGGSVVWDDAVKGRIEISNDELDDLVIARPDGTPTYNFCVVVDDMDMQITHVIRGDDHVNNTPRQINILRALGGTPPVYAHLPTVLNEQGEKMSKRHGAMAVTGYRDAGYLPEAIVNYLARLGWAHGDAEIFSREQFIEWFDLEHLGKSPAQYNPEKLAWLNNHYIKQADNVRLAGLVKPFIEALGGKVDGGPVLADVVALVKDRANTLREVAQTALLFYRSDLAVEPELAAQHLTDDVRPGIAALAEKLGALPEWKREAIGAVFKEVLAAHGWKMPKLAMPVRLLVAGQLQTPSIDAVLELFGRDVVLHRLAA.

The short motif at 11–21 (PSPTGFIHLGN) is the 'HIGH' region element. The segment at 118 to 139 (GEKPRYDGTWRPAPGKILPPPP) is disordered. The 'KMSKS' region motif lies at 243–247 (KMSKR). K246 contacts ATP.

The protein belongs to the class-I aminoacyl-tRNA synthetase family. Glutamate--tRNA ligase type 1 subfamily. In terms of assembly, monomer.

The protein localises to the cytoplasm. It catalyses the reaction tRNA(Glu) + L-glutamate + ATP = L-glutamyl-tRNA(Glu) + AMP + diphosphate. In terms of biological role, catalyzes the attachment of glutamate to tRNA(Glu) in a two-step reaction: glutamate is first activated by ATP to form Glu-AMP and then transferred to the acceptor end of tRNA(Glu). The sequence is that of Glutamate--tRNA ligase from Ralstonia pickettii (strain 12J).